The sequence spans 449 residues: MSPESKKLFNIIILGVAFMFMFTAFQTCGNVAQTVIRSLNSTDFHGSGYTSMAIIYGVFSASNLITPSVVAIVGPQLSMFASGLFYSMYIAVFIQPFPWSFYTASVFIGIAAAVLWTAQGNCLTINSDEHTIGRNSGIFWALLQSSLFFGNLYIYFAWQGKTQISESDRRTVFIALTVISLVGTVLFFLIRKPDSENVLGEDESSDDQDMEVNESAQNNLTKAVDAFKKSFKLCVTKEMLLLSITTAYTGLELTFFSGVYGTCIGAINKFGAEEKSLIGLSGIFIGIGEILGGSLFGLLSKNNRFGRNPVVLLGILVHFIAFYLIFLNMPGDAPIAPVKGTDSSAYIKSSKEVAILCSFLLGLGDSCFNTQLLSILGFLYSEDSAPAFAIFKFVQSICAAVAFFYSNYLLLHWQLLVMVIFGFFGTISFFTVEWEAAAFVARGSDYRSI.

Residues 8–28 traverse the membrane as a helical segment; it reads LFNIIILGVAFMFMFTAFQTC. Residue N40 is glycosylated (N-linked (GlcNAc...) asparagine). Transmembrane regions (helical) follow at residues 53–73, 74–94, 96–116, 138–158, and 170–190; these read AIIY…VAIV, GPQL…AVFI, PFPW…AVLW, IFWA…YFAW, and RTVF…FFLI. S204 bears the Phosphoserine mark. 6 helical membrane passes run 239–259, 277–297, 309–329, 359–379, 385–405, and 410–430; these read MLLL…FSGV, LIGL…SLFG, PVVL…FLNM, FLLG…LGFL, APAF…AFFY, and LLHW…ISFF.

This sequence belongs to the unc-93 family.

It localises to the membrane. The chain is UNC93-like protein MFSD11 (MFSD11) from Macaca fascicularis (Crab-eating macaque).